Consider the following 72-residue polypeptide: Translation initiation factor IF-1 (72 aa).

The region spanning 1–72 (MAKEDCIEME…TKGRIKFRSK (72 aa)) is the S1-like domain.

Belongs to the IF-1 family. In terms of assembly, component of the 30S ribosomal translation pre-initiation complex which assembles on the 30S ribosome in the order IF-2 and IF-3, IF-1 and N-formylmethionyl-tRNA(fMet); mRNA recruitment can occur at any time during PIC assembly.

The protein localises to the cytoplasm. Functionally, one of the essential components for the initiation of protein synthesis. Stabilizes the binding of IF-2 and IF-3 on the 30S subunit to which N-formylmethionyl-tRNA(fMet) subsequently binds. Helps modulate mRNA selection, yielding the 30S pre-initiation complex (PIC). Upon addition of the 50S ribosomal subunit IF-1, IF-2 and IF-3 are released leaving the mature 70S translation initiation complex. This is Translation initiation factor IF-1 from Francisella tularensis subsp. tularensis (strain WY96-3418).